Here is a 303-residue protein sequence, read N- to C-terminus: MMSESNKQQAVNKLTEIVANFTAMISTRMPDDVVDKLKQLKDAETSSMGKIIYHTMFDNMQKAIDLNRPACQDTGEIMFFVKVGSRFPLLGELQSILKQAVEEATVKAPLRHNAVEIFDEVNTGKNTGSGVPWVTWDIIPDNDDAEIEVYMAGGGCTLPGRSKVLMPSEGYEGVVKFVFENISTLAVNACPPVLVGVGIATSVETAAVLSRKAILRPIGSRHPNPKAAELELRLEEGLNRLGIGPQGLTGNSSVMGVHIESAARHPSTIGVAVSTGCWAHRRGTLLVHADLTFENLSHTRSAL.

3 residues coordinate iron-sulfur cluster: Cys71, Cys190, and Cys277.

The protein belongs to the class-I fumarase family. Tetramer of two alpha and two beta subunits. Requires iron-sulfur cluster as cofactor.

It catalyses the reaction (2R,3R)-tartrate = oxaloacetate + H2O. In Escherichia coli O6:K15:H31 (strain 536 / UPEC), this protein is L(+)-tartrate dehydratase subunit alpha (ttdA).